Here is a 288-residue protein sequence, read N- to C-terminus: Pirin-like protein CC_3178 (288 aa).

This sequence belongs to the pirin family.

The protein is Pirin-like protein CC_3178 of Caulobacter vibrioides (strain ATCC 19089 / CIP 103742 / CB 15) (Caulobacter crescentus).